A 345-amino-acid polypeptide reads, in one-letter code: cAMP-responsive element modulator (345 aa).

The KID domain occupies 88–147; the sequence is VQVAAIAETDESAESEGVIDSHKRREILSRRPSYRKILNELSSDVPGVPKIEEERSEEEG. A phosphoserine mark is found at serine 102, serine 129, serine 271, serine 274, and serine 277. The bZIP domain maps to 286–345; that stretch reads TRKRELRLMKNREAAKECRRRKKEYVKCLESRVAVLEVQNKKLIEELETLKDICSPKTDY. The interval 287–312 is basic motif; the sequence is RKRELRLMKNREAAKECRRRKKEYVK. The interval 314 to 335 is leucine-zipper; sequence LESRVAVLEVQNKKLIEELETL.

The protein belongs to the bZIP family. Binds DNA as a dimer. Interacts with FHL5. Interacts with CDC34. May interact with TSSK4. Isoform 9 is ubiquitinated by CDC34 and RAD6B in order to be degraded by the proteasome. In terms of processing, stimulated by phosphorylation. Phosphorylated on Ser-116 by TSSK4 in vitro. In terms of tissue distribution, expressed in testes (round spermatids) (at protein level). Isoform 14 is the major activator form in testes.

Its subcellular location is the nucleus. The protein resides in the cytoplasm. Transcriptional regulator that binds the cAMP response element (CRE), a sequence present in many viral and cellular promoters. Isoforms are either transcriptional activators or repressors. Plays a role in spermatogenesis and is involved in spermatid maturation. Its function is as follows. May play a role in the regulation of the circadian clock: acts as a transcriptional repressor of the core circadian component PER1 by directly binding to cAMP response elements in its promoter. The protein is cAMP-responsive element modulator of Homo sapiens (Human).